Reading from the N-terminus, the 142-residue chain is ATP synthase epsilon chain (142 aa).

The protein belongs to the ATPase epsilon chain family. In terms of assembly, F-type ATPases have 2 components, CF(1) - the catalytic core - and CF(0) - the membrane proton channel. CF(1) has five subunits: alpha(3), beta(3), gamma(1), delta(1), epsilon(1). CF(0) has three main subunits: a, b and c.

The protein localises to the cell inner membrane. Produces ATP from ADP in the presence of a proton gradient across the membrane. The chain is ATP synthase epsilon chain from Actinobacillus succinogenes (strain ATCC 55618 / DSM 22257 / CCUG 43843 / 130Z).